Reading from the N-terminus, the 381-residue chain is tRNA (guanine(26)-N(2))-dimethyltransferase (381 aa).

Residues 6–378 (FEVHEGKAKV…APYEVFVEVM (373 aa)) enclose the Trm1 methyltransferase domain. S-adenosyl-L-methionine contacts are provided by Arg38, Arg63, Asp80, Asp122, and Ala123.

This sequence belongs to the class I-like SAM-binding methyltransferase superfamily. Trm1 family. Monomer.

It catalyses the reaction guanosine(26) in tRNA + 2 S-adenosyl-L-methionine = N(2)-dimethylguanosine(26) in tRNA + 2 S-adenosyl-L-homocysteine + 2 H(+). Functionally, dimethylates a single guanine residue at position 26 of a number of tRNAs using S-adenosyl-L-methionine as donor of the methyl groups. This Pyrococcus furiosus (strain ATCC 43587 / DSM 3638 / JCM 8422 / Vc1) protein is tRNA (guanine(26)-N(2))-dimethyltransferase.